The sequence spans 214 residues: Dual specificity phosphatase 29 (214 aa).

One can recognise a Tyrosine-protein phosphatase domain in the interval 46–194 (HVNEVWPNLY…LRELDIELAL (149 aa)). 138-145 (HCAMGRSR) is a substrate binding site. Residue Cys-139 is the Phosphocysteine intermediate of the active site.

It belongs to the protein-tyrosine phosphatase family. Non-receptor class dual specificity subfamily.

It is found in the cytoplasm. It localises to the nucleus. It carries out the reaction O-phospho-L-tyrosyl-[protein] + H2O = L-tyrosyl-[protein] + phosphate. It catalyses the reaction O-phospho-L-seryl-[protein] + H2O = L-seryl-[protein] + phosphate. The enzyme catalyses O-phospho-L-threonyl-[protein] + H2O = L-threonyl-[protein] + phosphate. Functionally, dual specificity phosphatase able to dephosphorylate phosphotyrosine, phosphoserine and phosphothreonine residues within the same substrate, with a preference for phosphotyrosine as a substrate. Involved in the modulation of AMPK and MAPK1/2 signaling pathways. This chain is Dual specificity phosphatase 29 (DUSP29), found in Gallus gallus (Chicken).